Reading from the N-terminus, the 153-residue chain is Facilitator of iron transport 2 (153 aa).

The first 18 residues, 1 to 18 (MKFSTIFGATTVMTAVSA), serve as a signal peptide directing secretion. The disordered stretch occupies residues 73–98 (TEGPDTTSEKSTTKTLTLTNGSGSST). Over residues 85–98 (TKTLTLTNGSGSST) the composition is skewed to low complexity. Residue N92 is glycosylated (N-linked (GlcNAc...) asparagine). The GPI-anchor amidated glycine moiety is linked to residue G130. A propeptide spans 131–153 (AAPAAFQGASVGALALGLISYLL) (removed in mature form).

In terms of processing, the GPI-anchor is attached to the protein in the endoplasmic reticulum and serves to target the protein to the cell surface. There, the glucosamine-inositol phospholipid moiety is cleaved off and the GPI-modified mannoprotein is covalently attached via its lipidless GPI glycan remnant to the 1,6-beta-glucan of the outer cell wall layer.

The protein localises to the secreted. It localises to the cell wall. The protein resides in the membrane. Involved in the uptake of non-siderophore and siderophore sources of iron. Has a role in the retention of iron in the cell wall and periplasmic space. The chain is Facilitator of iron transport 2 (FIT2) from Saccharomyces cerevisiae (strain ATCC 204508 / S288c) (Baker's yeast).